Reading from the N-terminus, the 394-residue chain is Phosphoglycerate kinase (394 aa).

Substrate-binding positions include Asp21–Asn23, Arg36, His59–Arg62, Arg113, and Arg146. ATP is bound by residues Lys197, Glu319, and Gly345 to Thr348.

This sequence belongs to the phosphoglycerate kinase family. As to quaternary structure, monomer.

The protein localises to the cytoplasm. It catalyses the reaction (2R)-3-phosphoglycerate + ATP = (2R)-3-phospho-glyceroyl phosphate + ADP. It functions in the pathway carbohydrate degradation; glycolysis; pyruvate from D-glyceraldehyde 3-phosphate: step 2/5. In Halorhodospira halophila (strain DSM 244 / SL1) (Ectothiorhodospira halophila (strain DSM 244 / SL1)), this protein is Phosphoglycerate kinase.